Reading from the N-terminus, the 235-residue chain is Small ribosomal subunit protein eS4 (235 aa).

Positions 37–100 (LPLGIIIRDI…NETYRMFQDE (64 aa)) constitute an S4 RNA-binding domain.

Belongs to the eukaryotic ribosomal protein eS4 family.

This Methanosarcina barkeri (strain Fusaro / DSM 804) protein is Small ribosomal subunit protein eS4.